Reading from the N-terminus, the 423-residue chain is COP9 signalosome complex subunit 3 (423 aa).

In terms of domain architecture, PCI spans 197 to 365 (NFERALYFYE…GMVCFHDNPE (169 aa)). Positions 403 to 423 (FVQKSMGSQDDDSGSKPSSYS) are disordered.

The protein belongs to the CSN3 family. Component of the CSN complex, probably composed of cops1, cops2, cops3, cops4, cops5, cops6, cops7, cops8 and cops9.

The protein localises to the cytoplasm. The protein resides in the nucleus. Component of the COP9 signalosome complex (CSN), a complex involved in various cellular and developmental processes. The CSN complex is an essential regulator of the ubiquitin (Ubl) conjugation pathway by mediating the deneddylation of the cullin subunits of E3 ligase complexes, leading to modify the Ubl ligase activity. The polypeptide is COP9 signalosome complex subunit 3 (cops3) (Xenopus tropicalis (Western clawed frog)).